The following is a 663-amino-acid chain: Putative ankyrin repeat protein R219 (663 aa).

ANK repeat units lie at residues 91–118 (FRIKKLHVQIMLKEYDKIEFLINSGYKV), 119–148 (DFDSLKLACLNGSLDILNLLLKFYQKKLSS), 200–229 (ANQQVMENAFKTNHTDIINLLLIRAKKDGT), 258–288 (DWHVELYYSALLSGSMEMITYLEDKIDKINP), and 322–351 (YFSHTMNYAIQSGSVNVVDYIWSRGYGITV).

The sequence is that of Putative ankyrin repeat protein R219 from Acanthamoeba polyphaga mimivirus (APMV).